Reading from the N-terminus, the 361-residue chain is Peptide chain release factor 1 (361 aa).

Q233 is subject to N5-methylglutamine. Residues 282–310 are disordered; the sequence is SKKQAERAQNRKSQVGSGDRSERIRTYNF.

Belongs to the prokaryotic/mitochondrial release factor family. Post-translationally, methylated by PrmC. Methylation increases the termination efficiency of RF1.

Its subcellular location is the cytoplasm. Peptide chain release factor 1 directs the termination of translation in response to the peptide chain termination codons UAG and UAA. This Treponema denticola (strain ATCC 35405 / DSM 14222 / CIP 103919 / JCM 8153 / KCTC 15104) protein is Peptide chain release factor 1.